The following is a 283-amino-acid chain: Shikimate kinase (283 aa).

86-96 (PIKSGLSSSSA) serves as a coordination point for ATP.

This sequence belongs to the GHMP kinase family. Archaeal shikimate kinase subfamily.

It is found in the cytoplasm. The enzyme catalyses shikimate + ATP = 3-phosphoshikimate + ADP + H(+). Its pathway is metabolic intermediate biosynthesis; chorismate biosynthesis; chorismate from D-erythrose 4-phosphate and phosphoenolpyruvate: step 5/7. This chain is Shikimate kinase, found in Methanococcus maripaludis (strain C5 / ATCC BAA-1333).